A 143-amino-acid polypeptide reads, in one-letter code: uncharacterized protein (143 aa).

The interval 1-143 (MRSSRQKASI…WFSQTVKRKA (143 aa)) is disordered. Composition is skewed to basic and acidic residues over residues 34–46 (ISAEKEEEEKHLD) and 61–76 (EYQKETKEKETDRKIV). 2 stretches are compositionally biased toward acidic residues: residues 77-93 (DDEEETKFETTLEPEEE) and 103-115 (YEEEDEDEEPDLA).

This is an uncharacterized protein from Bacillus subtilis (strain 168).